Reading from the N-terminus, the 367-residue chain is Porin Omp2a (367 aa).

Positions 1 to 22 (MNIKSLLLGSAAALVAASGAQA) are cleaved as a signal peptide.

This sequence belongs to the alphaproteobacteria porin family. As to quaternary structure, monomer.

Its subcellular location is the cell outer membrane. Forms passive diffusion pores that allow small molecular weight hydrophilic materials across the outer membrane. In Brucella suis, this protein is Porin Omp2a (omp2a).